Reading from the N-terminus, the 191-residue chain is MPKASEIKKFAAIEHNGKVFLVKDIKKLTPSGRAGASLYRMRLYDVATGSKTDESFKADEMITLADFRRHPVMFSYIDGEEYVFMDSEDYTPYNFNKDSIVEELLFITEDTQGLQVLTVDDLPVAIELPATVDMVISETDPSIKGASASARTKPAIMSTGLSVQVPEYIASGEKIKINTAEQKFMSRADSK.

This sequence belongs to the elongation factor P family.

This is Elongation factor P-like protein from Photobacterium profundum (strain SS9).